Here is a 772-residue protein sequence, read N- to C-terminus: MTMFNGDVEDGGRSNVSCGKDLKRYLMLMGVVALVVLFGAFIYRQSSGGLRLGAMMEQMTGARGAVNVPAQHGAPSAVVDPAMSVPARARVAPPSAAGAIATFPPVVDFGPAPVVSGGPFTGVVTLLRNSVVSVTASSSGGQVMPDPLGLVNPDGLPRFANPTTRSVENIGTGVIVRNDGFIVTNYHVVRGANSVYVTVKDDVGSIRYSGEIVKMDEALDLALLKITPKVQLTAAVLGDSDAVNVADEVIAIGTPFGLDMTVSRGIISAKRKTMVIEGMTHSNLLQTDAAINQGNSGGPLVAANGTVVGINTAIYTPNGAFAGIGFAVPSNQARLFALDEVGWLPTSTAEGPAMGLVAMQRPMGVGVGAAGPVIAAGTPSPHVDGRQNMDCSNCHDIIPAGNGFQAPMMPVAAPVPPPPIPANAVSPHTDGRQNMTCNTCHQFVGGAAAGPIAFGQPMMPIAAPQQPAPAIRANAANPHTDGRQNMNCASCHQIIGSVGAAPIAAPGAGGAYRFSQPPGSLAINIQGPRGGQGAVAGSGGSRASLLGAALTPLTQRLGLQANLPAGRGVFVNGVTPNTPAASAGLRPGDVILKVDGRPVHQPEEVAAIMAEMPNGRSVRIGVLRAGDVSNMSLVTGPSGLAAAVVQAPTAPVVMAGGAPTVPGVQPVIPKVPTEFNWLGMEIETFMAPQPVVGMPGATPVAGGGKGAQVAEVLAGSRAAVAGLQANDLIIEVNNRPVTSPARLDAAIKAATAAGQQILLKVHRNGQEFWIVL.

At Met-1 to Asp-21 the chain is on the cytoplasmic side. Residues Leu-22 to Ile-42 form a helical membrane-spanning segment. Topologically, residues Tyr-43 to Leu-772 are lumenal. Active-site charge relay system residues include His-187, Asp-220, and Ser-296. An MCR (magnetochrome) 1 motif is present at residues Ile-374–Ile-397. Positions 391, 394, 395, 437, 440, 441, 488, 491, and 492 each coordinate heme. Short sequence motifs (MCR) lie at residues Ile-420–Phe-443 and Ala-470–Ile-494. The 114-residue stretch at Gly-445–Gly-558 folds into the Cytochrome c domain. 2 consecutive PDZ domains span residues Ala-522–Gly-626 and Gly-696–Gly-765.

This sequence in the N-terminal section; belongs to the peptidase S1C family. In terms of assembly, might interact with MamB via PDZ1. Heme serves as cofactor. The protein isolated from magnetosome membranes has a molecular weight of about 36.3 kDa, probably due to C-terminal cleavage. Subject to autocatalytic cleavage; cleavage also requires MamO; these may be the same event.

Its subcellular location is the magnetosome membrane. Acts at 2 distinct steps of magnetosome formation; required for correct localization of proteins to the magnetosome while the protease activity is required for maturation of small magnetite crystals into larger, functional ones. Probably cleaves at least itself, MamO and MamP; cleavage requires the putative transprot domain of MamO. Involved in localization of some proteins (at least MamA, MamC, MamF, MamI and MamJ) to the magnetosome. One of 7 genes (mamLQBIEMO) able to induce magnetosome membrane biogenesis; coexpression of mamLQRBIEMO in a deletion of the 17 gene mamAB operon restores magnetosome vesicle formation but not magnetite biosynthesis. The sequence is that of Magnetosome formation protease MamE from Magnetospirillum gryphiswaldense (strain DSM 6361 / JCM 21280 / NBRC 15271 / MSR-1).